We begin with the raw amino-acid sequence, 468 residues long: Glutamate--tRNA ligase (468 aa).

The 'HIGH' region motif lies at 10-20; sequence PSPTGYLHIGG. Positions 252 to 256 match the 'KMSKS' region motif; it reads KLSKR. Residue Lys255 coordinates ATP.

It belongs to the class-I aminoacyl-tRNA synthetase family. Glutamate--tRNA ligase type 1 subfamily. Monomer.

It is found in the cytoplasm. It catalyses the reaction tRNA(Glu) + L-glutamate + ATP = L-glutamyl-tRNA(Glu) + AMP + diphosphate. In terms of biological role, catalyzes the attachment of glutamate to tRNA(Glu) in a two-step reaction: glutamate is first activated by ATP to form Glu-AMP and then transferred to the acceptor end of tRNA(Glu). This is Glutamate--tRNA ligase from Mycoplasmopsis pulmonis (strain UAB CTIP) (Mycoplasma pulmonis).